We begin with the raw amino-acid sequence, 197 residues long: Auxin-responsive protein IAA31 (197 aa).

Disordered regions lie at residues 1–43 (MENL…DQAK) and 66–90 (SCLQ…ETQQ). Positions 9-13 (LRLGL) match the EAR-like (transcriptional repression) motif. The 88-residue stretch at 99–186 (GLFVKVSMDG…TCKRLRIMKG (88 aa)) folds into the PB1 domain.

This sequence belongs to the Aux/IAA family. As to quaternary structure, homodimers and heterodimers. As to expression, highly expressed in etiolated seedlings. Expressed in roots.

It localises to the nucleus. Aux/IAA proteins are short-lived transcriptional factors that function as repressors of early auxin response genes at low auxin concentrations. This Oryza sativa subsp. japonica (Rice) protein is Auxin-responsive protein IAA31 (IAA31).